Reading from the N-terminus, the 324-residue chain is Putative ribose-phosphate pyrophosphokinase 1 (324 aa).

ATP-binding positions include 43–45 (DGE) and 102–103 (RQ). His136 is a binding site for Mg(2+). D-ribose 5-phosphate contacts are provided by residues Asp225 and 229–233 (NTGQT).

It belongs to the ribose-phosphate pyrophosphokinase family. Class I subfamily. Homohexamer. Mg(2+) is required as a cofactor.

Its subcellular location is the cytoplasm. It catalyses the reaction D-ribose 5-phosphate + ATP = 5-phospho-alpha-D-ribose 1-diphosphate + AMP + H(+). It functions in the pathway metabolic intermediate biosynthesis; 5-phospho-alpha-D-ribose 1-diphosphate biosynthesis; 5-phospho-alpha-D-ribose 1-diphosphate from D-ribose 5-phosphate (route I): step 1/1. Functionally, involved in the biosynthesis of the central metabolite phospho-alpha-D-ribosyl-1-pyrophosphate (PRPP) via the transfer of pyrophosphoryl group from ATP to 1-hydroxyl of ribose-5-phosphate (Rib-5-P). The chain is Putative ribose-phosphate pyrophosphokinase 1 from Enterococcus faecalis (strain ATCC 700802 / V583).